Consider the following 197-residue polypeptide: Small ribosomal subunit protein uS4c (197 aa).

In terms of domain architecture, S4 RNA-binding spans 82–143; the sequence is MRLDNILFRL…KQRSKALIQN (62 aa).

Belongs to the universal ribosomal protein uS4 family. In terms of assembly, part of the 30S ribosomal subunit. Contacts protein S5. The interaction surface between S4 and S5 is involved in control of translational fidelity.

It localises to the plastid. The protein resides in the chloroplast. Its function is as follows. One of the primary rRNA binding proteins, it binds directly to 16S rRNA where it nucleates assembly of the body of the 30S subunit. With S5 and S12 plays an important role in translational accuracy. This chain is Small ribosomal subunit protein uS4c (rps4), found in Gladiolus papilio (Goldblotch gladiolus).